A 307-amino-acid polypeptide reads, in one-letter code: N-acetylmuramic acid 6-phosphate etherase (307 aa).

Positions 57–220 (IIEAFKTNGR…TTASMIGVGK (164 aa)) constitute an SIS domain. Glu85 serves as the catalytic Proton donor. The active site involves Glu116.

The protein belongs to the GCKR-like family. MurNAc-6-P etherase subfamily. Homodimer.

It carries out the reaction N-acetyl-D-muramate 6-phosphate + H2O = N-acetyl-D-glucosamine 6-phosphate + (R)-lactate. The protein operates within amino-sugar metabolism; N-acetylmuramate degradation. Specifically catalyzes the cleavage of the D-lactyl ether substituent of MurNAc 6-phosphate, producing GlcNAc 6-phosphate and D-lactate. This Alkaliphilus metalliredigens (strain QYMF) protein is N-acetylmuramic acid 6-phosphate etherase.